We begin with the raw amino-acid sequence, 513 residues long: Pantetheinase (513 aa).

Residues 1–21 (MTTQLPAYVAILLFYVSRASC) form the signal peptide. N-linked (GlcNAc...) asparagine glycosylation occurs at Asn38. The CN hydrolase domain occupies 39–306 (ATLTPVSREE…GKLLLSQLDS (268 aa)). The active-site Proton acceptor is Glu79. Asn130 carries N-linked (GlcNAc...) asparagine glycosylation. The active-site Proton donor is the Lys178. Asn200 carries an N-linked (GlcNAc...) asparagine glycan. The active-site Nucleophile is the Cys211. N-linked (GlcNAc...) asparagine glycans are attached at residues Asn283, Asn315, and Asn353. The GPI-anchor amidated glycine moiety is linked to residue Gly491. Residues 492 to 513 (LTAQARIIMLIVIAPIVCSLSW) constitute a propeptide, removed in mature form.

Belongs to the carbon-nitrogen hydrolase superfamily. BTD/VNN family. Monomer. Widely expressed with higher expression in spleen, kidney and blood. Overexpressed in lesional psoriatic skin.

It localises to the cell membrane. It catalyses the reaction (R)-pantetheine + H2O = cysteamine + (R)-pantothenate. Its function is as follows. Amidohydrolase that hydrolyzes specifically one of the carboamide linkages in D-pantetheine thus recycling pantothenic acid (vitamin B5) and releasing cysteamine. This Homo sapiens (Human) protein is Pantetheinase (VNN1).